We begin with the raw amino-acid sequence, 309 residues long: Taste receptor type 2 member 8 (309 aa).

Residues 1 to 7 are Extracellular-facing; it reads MFSPADN. A helical transmembrane segment spans residues 8–28; it reads IFIILITGEFILGILGNGYIA. Residues 29–50 lie on the Cytoplasmic side of the membrane; the sequence is LVNWIDWIKKKKISTIDYILTN. The chain crosses the membrane as a helical span at residues 51–71; sequence LVISRICLISVMVVNGIVIAV. Residues 72-82 lie on the Extracellular side of the membrane; it reads YPDVYTKSKLQ. The chain crosses the membrane as a helical span at residues 83-103; the sequence is IAICTFWTFANYLNMWITTCL. Over 104–131 the chain is Cytoplasmic; that stretch reads NVFYFLKIANSSHPLFLWLKQKIDMVVR. A helical membrane pass occupies residues 132–152; it reads WILLGCFAISLLVSLIAAIVL. The Extracellular segment spans residues 153–184; the sequence is SYDYRFHAIAKHKRNITEMFHVSKRPYFEPLT. Asn-167 is a glycosylation site (N-linked (GlcNAc...) asparagine). The chain crosses the membrane as a helical span at residues 185 to 205; it reads LFNLFAIVPFIVSLISFFLLV. Over 206 to 239 the chain is Cytoplasmic; it reads RSLWRHTKQIKLYATGGRDPSTEVHVRAIKTMTS. Residues 240 to 260 form a helical membrane-spanning segment; it reads FIFLFFLYYISSILVTFSYLM. The Extracellular portion of the chain corresponds to 261–266; that stretch reads TKYKLA. The helical transmembrane segment at 267–287 threads the bilayer; that stretch reads VEFGEIVAILYPLGHSLILIV. Topologically, residues 288 to 309 are cytoplasmic; that stretch reads LNNKLRQTFVRMLTCRKIACVI.

It belongs to the G-protein coupled receptor T2R family.

The protein localises to the membrane. Receptor that may play a role in the perception of bitterness and is gustducin-linked. May play a role in sensing the chemical composition of the gastrointestinal content. The activity of this receptor may stimulate alpha gustducin, mediate PLC-beta-2 activation and lead to the gating of TRPM5. The protein is Taste receptor type 2 member 8 (TAS2R8) of Gorilla gorilla gorilla (Western lowland gorilla).